Here is an 83-residue protein sequence, read N- to C-terminus: Mu-theraphotoxin-Hhn2k (83 aa).

The signal sequence occupies residues 1-21; sequence MKASMFLALAGLVLLFVVDYA. Positions 22–48 are excised as a propeptide; sequence SESEEKEFPIELLSKIFAVDVFKGEER. 3 cysteine pairs are disulfide-bonded: Cys50-Cys65, Cys57-Cys70, and Cys64-Cys77. Leu81 bears the Leucine amide mark.

It belongs to the neurotoxin 10 (Hwtx-1) family. 15 (Hntx-3) subfamily. Monomer. As to expression, expressed by the venom gland.

The protein resides in the secreted. In terms of biological role, lethal neurotoxin. Selectively blocks tetrodotoxin-sensitive voltage-gated sodium channels (Nav). Does not affect tetrodotoxin-resistant voltage-gated sodium channels or calcium channels. The protein is Mu-theraphotoxin-Hhn2k of Cyriopagopus hainanus (Chinese bird spider).